The sequence spans 509 residues: Citrate synthase 3, peroxisomal (509 aa).

Catalysis depends on residues histidine 319, histidine 358, and aspartate 414. A disordered region spans residues serine 485–valine 509. Residues serine 500–valine 509 are compositionally biased toward basic residues.

Belongs to the citrate synthase family. As to expression, widely expressed. Expressed throughout the shoot. Expressed in flower, silique, stem, cauline leaf, young leaf, mature leaf and senescent leaf.

It localises to the peroxisome. The catalysed reaction is oxaloacetate + acetyl-CoA + H2O = citrate + CoA + H(+). It functions in the pathway carbohydrate metabolism; tricarboxylic acid cycle; isocitrate from oxaloacetate: step 1/2. Peroxisomal citrate synthase required for the fatty acid respiration in seedlings, citrate being exported from peroxisomes into mitochondria during respiration of triacylglycerol (TAG). Indeed, complete respiration requires the transfer of carbon in the form of citrate from the peroxisome to the mitochondria. This Arabidopsis thaliana (Mouse-ear cress) protein is Citrate synthase 3, peroxisomal (CSY3).